Here is a 205-residue protein sequence, read N- to C-terminus: Small ribosomal subunit protein uS4 (205 aa).

Residues 19 to 45 form a disordered region; sequence IWGRPKSPVNRREYGPGQHGQRRKGKL. One can recognise an S4 RNA-binding domain in the interval 94-157; the sequence is SRLDAVVYRA…KQLAIVLEAV (64 aa).

The protein belongs to the universal ribosomal protein uS4 family. Part of the 30S ribosomal subunit. Contacts protein S5. The interaction surface between S4 and S5 is involved in control of translational fidelity.

One of the primary rRNA binding proteins, it binds directly to 16S rRNA where it nucleates assembly of the body of the 30S subunit. In terms of biological role, with S5 and S12 plays an important role in translational accuracy. In Brucella melitensis biotype 2 (strain ATCC 23457), this protein is Small ribosomal subunit protein uS4.